The sequence spans 2195 residues: Genome polyprotein (2195 aa).

Gly2 carries the N-myristoyl glycine; by host lipid modification. The Cytoplasmic portion of the chain corresponds to 2-1505; the sequence is GAQVSTQKTG…HVSRAFICLQ (1504 aa). The segment at 567–583 is amphipathic alpha-helix; it reads LLQGDVVEAVENAVARV. Catalysis depends on for protease 2A activity residues His882 and Asp900. Zn(2+) is bound by residues Cys917 and Cys919. The active-site For protease 2A activity is the Cys971. Zn(2+) is bound by residues Cys977 and His979. A membrane-binding region spans residues 1111 to 1183; the sequence is NNGWLKKFTE…EQSAPSQSDQ (73 aa). The tract at residues 1111-1249 is oligomerization; sequence NNGWLKKFTE…SPGAGKSVAT (139 aa). Residues 1132-1136 form an RNA-binding region; the sequence is SIKIQ. An SF3 helicase domain is found at 1215–1371; it reads EKKMSNYIQF…SMYSQNGKIN (157 aa). 3 residues coordinate Zn(2+): Cys1379, Cys1391, and Cys1396. The C4-type; degenerate zinc-finger motif lies at 1379–1396; the sequence is CDEECCPVNFKRCCPLVC. An RNA-binding region spans residues 1423-1430; the sequence is EYNHRHSV. The tract at residues 1434 to 1439 is oligomerization; that stretch reads LEALFQ. Residues 1506–1521 lie within the membrane without spanning it; it reads ALTTFVSVAGIIYIIY. Over 1522–2195 the chain is Cytoplasmic; it reads KLFAGFQGAY…TLRRKWLDSF (674 aa). Tyr1531 carries the post-translational modification O-(5'-phospho-RNA)-tyrosine. A Peptidase C3 domain is found at 1551 to 1729; sequence GPAFEFAVAM…FSAALLKHYF (179 aa). Residues His1590, Glu1621, and Cys1697 each act as for protease 3C activity in the active site. One can recognise a RdRp catalytic domain in the interval 1960-2076; sequence GHLIAFDYSG…SYPWPIDASL (117 aa). 2 residues coordinate Mg(2+): Asp1966 and Asp2062.

Belongs to the picornaviruses polyprotein family. Interacts with capsid protein VP1 and capsid protein VP3 to form heterotrimeric protomers. As to quaternary structure, interacts with capsid protein VP0, and capsid protein VP3 to form heterotrimeric protomers. Five protomers subsequently associate to form pentamers which serve as building blocks for the capsid. Interacts with capsid protein VP2, capsid protein VP3 and capsid protein VP4 following cleavage of capsid protein VP0. In terms of assembly, interacts with capsid protein VP1 and capsid protein VP3 in the mature capsid. Interacts with capsid protein VP0 and capsid protein VP1 to form heterotrimeric protomers. Five protomers subsequently associate to form pentamers which serve as building blocks for the capsid. Interacts with capsid protein VP4 in the mature capsid. Interacts with protein 2C; this interaction may be important for virion morphogenesis. As to quaternary structure, interacts with capsid protein VP1 and capsid protein VP3. In terms of assembly, homodimer. Homohexamer; forms a hexameric ring structure with 6-fold symmetry characteristic of AAA+ ATPases. Interacts (via N-terminus) with host RTN3 (via reticulon domain); this interaction is important for viral replication. Interacts with capsid protein VP3; this interaction may be important for virion morphogenesis. As to quaternary structure, interacts with protein 3CD. In terms of assembly, homodimer. Interacts with host GBF1. Interacts (via GOLD domain) with host ACBD3 (via GOLD domain); this interaction allows the formation of a viral protein 3A/ACBD3 heterotetramer with a 2:2 stoichiometry, which will stimulate the recruitment of host PI4KB in order to synthesize PI4P at the viral RNA replication sites. Interacts with RNA-directed RNA polymerase. As to quaternary structure, interacts with protein 3AB and with RNA-directed RNA polymerase. In terms of assembly, interacts with Viral protein genome-linked and with protein 3CD. Requires Mg(2+) as cofactor. In terms of processing, specific enzymatic cleavages in vivo by the viral proteases yield processing intermediates and the mature proteins. Post-translationally, myristoylation is required for the formation of pentamers during virus assembly. Further assembly of 12 pentamers and a molecule of genomic RNA generates the provirion. During virion maturation, immature virions are rendered infectious following cleavage of VP0 into VP4 and VP2. This maturation seems to be an autocatalytic event triggered by the presence of RNA in the capsid and it is followed by a conformational change infectious virion. In terms of processing, myristoylation is required during RNA encapsidation and formation of the mature virus particle. Post-translationally, VPg is uridylylated by the polymerase into VPg-pUpU. This acts as a nucleotide-peptide primer for the genomic RNA replication.

The protein resides in the virion. Its subcellular location is the host cytoplasm. The protein localises to the host cytoplasmic vesicle membrane. It is found in the host nucleus. It catalyses the reaction a ribonucleoside 5'-triphosphate + H2O = a ribonucleoside 5'-diphosphate + phosphate + H(+). The catalysed reaction is Selective cleavage of Tyr-|-Gly bond in the picornavirus polyprotein.. The enzyme catalyses RNA(n) + a ribonucleoside 5'-triphosphate = RNA(n+1) + diphosphate. It carries out the reaction Selective cleavage of Gln-|-Gly bond in the poliovirus polyprotein. In other picornavirus reactions Glu may be substituted for Gln, and Ser or Thr for Gly.. Its activity is regulated as follows. Replication or transcription is subject to high level of random mutations by the nucleotide analog ribavirin. Its function is as follows. Forms an icosahedral capsid of pseudo T=3 symmetry with capsid proteins VP2 and VP3. The capsid is 300 Angstroms in diameter, composed of 60 copies of each capsid protein and enclosing the viral positive strand RNA genome. Capsid protein VP1 mainly forms the vertices of the capsid. Capsid protein VP1 interacts with host cell receptor to provide virion attachment to target host cells. This attachment induces virion internalization. Tyrosine kinases are probably involved in the entry process. After binding to its receptor, the capsid undergoes conformational changes. Capsid protein VP1 N-terminus (that contains an amphipathic alpha-helix) and capsid protein VP4 are externalized. Together, they shape a pore in the host membrane through which viral genome is translocated to host cell cytoplasm. Functionally, forms an icosahedral capsid of pseudo T=3 symmetry with capsid proteins VP2 and VP3. The capsid is 300 Angstroms in diameter, composed of 60 copies of each capsid protein and enclosing the viral positive strand RNA genome. In terms of biological role, lies on the inner surface of the capsid shell. After binding to the host receptor, the capsid undergoes conformational changes. Capsid protein VP4 is released, Capsid protein VP1 N-terminus is externalized, and together, they shape a pore in the host membrane through which the viral genome is translocated into the host cell cytoplasm. Component of immature procapsids, which is cleaved into capsid proteins VP4 and VP2 after maturation. Allows the capsid to remain inactive before the maturation step. Its function is as follows. Cysteine protease that cleaves viral polyprotein and specific host proteins. It is responsible for the autocatalytic cleavage between the P1 and P2 regions, which is the first cleavage occurring in the polyprotein. Also cleaves the host translation initiation factor EIF4G1, in order to shut down the capped cellular mRNA translation. Inhibits the host nucleus-cytoplasm protein and RNA trafficking by cleaving host members of the nuclear pores. Counteracts stress granule formation probably by antagonizing its assembly or promoting its dissassembly. Functionally, plays an essential role in the virus replication cycle by acting as a viroporin. Creates a pore in the host endoplasmic reticulum and as a consequence releases Ca2+ in the cytoplasm of infected cell. In turn, high levels of cytoplasmic calcium may trigger membrane trafficking and transport of viral ER-associated proteins to viroplasms, sites of viral genome replication. In terms of biological role, induces and associates with structural rearrangements of intracellular membranes. Displays RNA-binding, nucleotide binding and NTPase activities. May play a role in virion morphogenesis and viral RNA encapsidation by interacting with the capsid protein VP3. Localizes the viral replication complex to the surface of membranous vesicles. Together with protein 3CD binds the Cis-Active RNA Element (CRE) which is involved in RNA synthesis initiation. Acts as a cofactor to stimulate the activity of 3D polymerase, maybe through a nucleid acid chaperone activity. Its function is as follows. Localizes the viral replication complex to the surface of membranous vesicles. It inhibits host cell endoplasmic reticulum-to-Golgi apparatus transport and causes the disassembly of the Golgi complex, possibly through GBF1 interaction. This would result in depletion of MHC, trail receptors and IFN receptors at the host cell surface. Plays an essential role in viral RNA replication by recruiting ACBD3 and PI4KB at the viral replication sites, thereby allowing the formation of the rearranged membranous structures where viral replication takes place. Functionally, acts as a primer for viral RNA replication and remains covalently bound to viral genomic RNA. VPg is uridylylated prior to priming replication into VPg-pUpU. The oriI viral genomic sequence may act as a template for this. The VPg-pUpU is then used as primer on the genomic RNA poly(A) by the RNA-dependent RNA polymerase to replicate the viral genome. During genome replication, the VPg-RNA linkage is removed by the host TDP2, thereby accelerating replication. During the late stage of the replication cycle, host TDP2 is excluded from sites of viral RNA synthesis and encapsidation, allowing for the generation of progeny virions. In terms of biological role, involved in the viral replication complex and viral polypeptide maturation. It exhibits protease activity with a specificity and catalytic efficiency that is different from protease 3C. Protein 3CD lacks polymerase activity. The 3C domain in the context of protein 3CD may have an RNA binding activity. Protein 3CD binds to the 5'UTR of the viral genome. Replicates the viral genomic RNA on the surface of intracellular membranes. May form linear arrays of subunits that propagate along a strong head-to-tail interaction called interface-I. Covalently attaches UMP to a tyrosine of VPg, which is used to prime RNA synthesis. The positive stranded RNA genome is first replicated at virus induced membranous vesicles, creating a dsRNA genomic replication form. This dsRNA is then used as template to synthesize positive stranded RNA genomes. ss(+)RNA genomes are either translated, replicated or encapsidated. Its function is as follows. Major viral protease that mediates proteolytic processing of the polyprotein. Cleaves host EIF5B, contributing to host translation shutoff. Also cleaves host PABPC1, contributing to host translation shutoff. Cleaves host NLRP1, triggers host N-glycine-mediated degradation of the autoinhibitory NLRP1 N-terminal fragment. The chain is Genome polyprotein from Echovirus 11 (strain Gregory).